The chain runs to 372 residues: MFRSALFLLLAPLALSHTTFTTLYVDEVNQGDGTCVRMNRDANTVTYPIEPLSSKDIACGKDGEKAVSRVCPAKANSLLTFEFRAWADGAQPGSIDISHKGPCAVYMKKVDDATADNNAAGDGWFKIWHTGYDESTEKWCTEKLIDNNGFLSVRVPSDIEQGYYLVRTELLALHAASDAPPDPQFYVNCAQIFVQGGGSAKPETVSIGEGYYSLDSPGVKYNIYEKPLQLPYPIPGPTVYESKGVEERSVCPAQKRTATAQNKGLKPAGCILQRDNWCGFEVPDYSDENGCWASSKKCWDQSDVCYKTALPTGISACDIWMTKCNGIDEACNSGDFNGPPNKGKVLTPEPKKLAGSTQVFKRDVRKYKKWTA.

A signal peptide spans 1–16; sequence MFRSALFLLLAPLALS. Positions 17 and 99 each coordinate Cu(2+). A disulfide bridge connects residues C59 and C189. O2 contacts are provided by H174 and Q184. Residue Y186 coordinates Cu(2+).

This sequence belongs to the polysaccharide monooxygenase AA9 family. Cu(2+) serves as cofactor.

The protein resides in the secreted. The enzyme catalyses [(1-&gt;4)-beta-D-glucosyl]n+m + reduced acceptor + O2 = 4-dehydro-beta-D-glucosyl-[(1-&gt;4)-beta-D-glucosyl]n-1 + [(1-&gt;4)-beta-D-glucosyl]m + acceptor + H2O.. Lytic polysaccharide monooxygenase (LPMO) that depolymerizes crystalline and amorphous polysaccharides via the oxidation of scissile alpha- or beta-(1-4)-glycosidic bonds, yielding C1 or C4 oxidation products. Catalysis by LPMOs requires the reduction of the active-site copper from Cu(II) to Cu(I) by a reducing agent and H(2)O(2) or O(2) as a cosubstrate. In Aspergillus tamarii, this protein is AA9 family lytic polysaccharide monooxygenase C.